Reading from the N-terminus, the 251-residue chain is Derlin-1 (251 aa).

N-acetylserine is present on serine 2. Over 2 to 15 the chain is Cytoplasmic; sequence SDIGDWFRSIPAIT. The helical transmembrane segment at 16–31 threads the bilayer; that stretch reads RYWFAATVAVPLVGKL. The Lumenal portion of the chain corresponds to 32 to 69; sequence GLISPAYLFLWPEAFLYRFQIWRPITATFYFPVGPGTG. Residues 70-89 traverse the membrane as a helical segment; the sequence is FLYLVNLYFLYQYSTRLETG. Residues 90 to 94 are Cytoplasmic-facing; that stretch reads AFDGR. The helical transmembrane segment at 95-115 threads the bilayer; that stretch reads PADYLFMLLFNWICIVITGLA. Residues 116–122 lie on the Lumenal side of the membrane; it reads MDMQLLM. Residues 123-137 traverse the membrane as a helical segment; it reads IPLIMSVLYVWAQLN. At 138–154 the chain is on the cytoplasmic side; the sequence is RDMIVSFWFGTRFKACY. Residues 155 to 166 traverse the membrane as a helical segment; the sequence is LPWVILGFNYII. Topologically, residues 167 to 170 are lumenal; the sequence is GGSV. The chain crosses the membrane as a helical span at residues 171–189; it reads INELIGNLVGHLYFFLMFR. Residues 190–251 are Cytoplasmic-facing; that stretch reads YPMDLGGRNF…WGQGFRLGDQ (62 aa). Phosphoserine is present on serine 201. Threonine 202 is subject to Phosphothreonine. Serine 226 carries the post-translational modification Phosphoserine. The segment at 229 to 251 is disordered; the sequence is RAADQNGGGGRHNWGQGFRLGDQ. The SHP-box motif lies at 241–248; the sequence is NWGQGFRL.

The protein belongs to the derlin family. As to quaternary structure, homotetramer. The four subunits of the tetramer are arranged in a twofold symmetry. Forms heterooligomers with DERL2 and DERL3; binding to DERL3 is poorer than that between DERL2 and DERL3. Interacts (via SHP-box motif) with VCP. Interacts with AMFR, SELENOS, SEL1L, SELENOK and SYVN1, as well as with SEL1L-SYVN1 and VCP-SELENOS protein complexes; this interaction is weaker than that observed between DERL2 and these complexes. Interacts with NGLY1 and YOD1. Does not bind to EDEM1. Interacts with DNAJB9. Interacts with RNF103. Interacts with HM13. Interacts with XBP1 isoform 1 (via luminal/ectodomain domain); the interaction obviates the need for ectodomain shedding prior HM13/SPP-mediated XBP1 isoform 1 cleavage. Interacts with the signal recognition particle/SRP and the SRP receptor; in the process of endoplasmic reticulum stress-induced pre-emptive quality control. May interact with UBXN6. Interacts with ZFAND2B; probably through VCP. Interacts with CCDC47. Interacts with C18orf32. May interact with TRAM1. Forms a complex with SVIP and VCP/p97. In terms of assembly, (Microbial infection) Interacts with the cytomegalovirus US11 protein. As to expression, ubiquitous.

It is found in the endoplasmic reticulum membrane. Its function is as follows. Functional component of endoplasmic reticulum-associated degradation (ERAD) for misfolded lumenal proteins. Forms homotetramers which encircle a large channel traversing the endoplasmic reticulum (ER) membrane. This allows the retrotranslocation of misfolded proteins from the ER into the cytosol where they are ubiquitinated and degraded by the proteasome. The channel has a lateral gate within the membrane which provides direct access to membrane proteins with no need to reenter the ER lumen first. May mediate the interaction between VCP and the misfolded protein. Also involved in endoplasmic reticulum stress-induced pre-emptive quality control, a mechanism that selectively attenuates the translocation of newly synthesized proteins into the endoplasmic reticulum and reroutes them to the cytosol for proteasomal degradation. By controlling the steady-state expression of the IGF1R receptor, indirectly regulates the insulin-like growth factor receptor signaling pathway. Functionally, (Microbial infection) In case of infection by cytomegaloviruses, it plays a central role in the export from the ER and subsequent degradation of MHC class I heavy chains via its interaction with US11 viral protein, which recognizes and associates with MHC class I heavy chains. Also participates in the degradation process of misfolded cytomegalovirus US2 protein. This Homo sapiens (Human) protein is Derlin-1.